The chain runs to 566 residues: Proline--tRNA ligase (566 aa).

The protein belongs to the class-II aminoacyl-tRNA synthetase family. ProS type 1 subfamily. Homodimer.

Its subcellular location is the cytoplasm. The catalysed reaction is tRNA(Pro) + L-proline + ATP = L-prolyl-tRNA(Pro) + AMP + diphosphate. Catalyzes the attachment of proline to tRNA(Pro) in a two-step reaction: proline is first activated by ATP to form Pro-AMP and then transferred to the acceptor end of tRNA(Pro). As ProRS can inadvertently accommodate and process non-cognate amino acids such as alanine and cysteine, to avoid such errors it has two additional distinct editing activities against alanine. One activity is designated as 'pretransfer' editing and involves the tRNA(Pro)-independent hydrolysis of activated Ala-AMP. The other activity is designated 'posttransfer' editing and involves deacylation of mischarged Ala-tRNA(Pro). The misacylated Cys-tRNA(Pro) is not edited by ProRS. In Bacillus anthracis (strain A0248), this protein is Proline--tRNA ligase.